The following is a 232-amino-acid chain: Protein Mis18-alpha (232 aa).

3 positions are modified to phosphoserine: serine 36, serine 39, and serine 40. In terms of domain architecture, Mis18 spans 79 to 177 (PLVFLCSGCR…SVEAIESYIL (99 aa)). Positions 84, 87, 140, and 143 each coordinate Zn(2+). Lysine 161 is covalently cross-linked (Glycyl lysine isopeptide (Lys-Gly) (interchain with G-Cter in SUMO2)). The residue at position 232 (serine 232) is a Phosphoserine.

Belongs to the mis18 family. Homodimer, and heterodimer with OIP5/MIS18B. Identified in a complex containing MIS18A, OIP5/MIS18B, MIS18BP1, RBBP7 and RBBP4.

Its subcellular location is the nucleus. The protein localises to the chromosome. It localises to the centromere. Required for recruitment of CENPA to centromeres and normal chromosome segregation during mitosis. In Otolemur garnettii (Small-eared galago), this protein is Protein Mis18-alpha (MIS18A).